A 64-amino-acid polypeptide reads, in one-letter code: Large ribosomal subunit protein bL35 (64 aa).

Belongs to the bacterial ribosomal protein bL35 family.

The chain is Large ribosomal subunit protein bL35 from Carboxydothermus hydrogenoformans (strain ATCC BAA-161 / DSM 6008 / Z-2901).